The sequence spans 192 residues: Ethylene-responsive transcription factor ERF027 (192 aa).

Positions 18-74 (VYRGIRCRSGKWVSEIREPRKTTRIWLGTYPMAEMAAAAYDVAAMALKGREAVLNFP) form a DNA-binding region, AP2/ERF. Disordered stretches follow at residues 104–132 (CEEGEEEKKAKEKKSSSSKSRARECHVDN) and 167–192 (APPSWMGSRPSDDSPENSNDEDLWGY). A compositionally biased stretch (acidic residues) spans 179 to 192 (DSPENSNDEDLWGY).

It belongs to the AP2/ERF transcription factor family. ERF subfamily.

Its subcellular location is the nucleus. Functionally, probably acts as a transcriptional activator. Binds to the GCC-box pathogenesis-related promoter element. May be involved in the regulation of gene expression by stress factors and by components of stress signal transduction pathways. In Arabidopsis thaliana (Mouse-ear cress), this protein is Ethylene-responsive transcription factor ERF027 (ERF027).